The following is a 713-amino-acid chain: Mitochondrial intermediate peptidase (713 aa).

Residues 1–35 constitute a mitochondrion transit peptide; that stretch reads MLCVGRLGGLGARAAALPPRRAGRGSLEAGIRARR. K126 is modified (N6-acetyllysine). H495 is a Zn(2+) binding site. The active site involves E496. Zn(2+)-binding residues include H499 and H502.

This sequence belongs to the peptidase M3 family. In terms of assembly, monomer. It depends on Zn(2+) as a cofactor.

It is found in the mitochondrion matrix. It catalyses the reaction Release of an N-terminal octapeptide as second stage of processing of some proteins imported into the mitochondrion.. Activity is divalent cation-dependent. It is stimulated by manganese, magnesium or calcium ions and reversibly inhibited by zinc, cobalt and iron. Functionally, cleaves proteins, imported into the mitochondrion, to their mature size. The protein is Mitochondrial intermediate peptidase (MIPEP) of Homo sapiens (Human).